The primary structure comprises 486 residues: MTTFYTVISWLSVFGYWLLIAGVTLRILMKRRAVPSAMAWLLIIYILPLVGIIAYLSFGELHLGKRRAERAKAMWPSTARWLSELKECQHIFANSNSEVATPLFQLCERRQGINGVKGNQLQLLTTTDDTLKALVRDIELARHNIEMVFYIWQPGGLVDQVAESLMAAARRGVHCRLLLDSAGSKQFFRSPYPAMMRNAGIEVVEALKVNVFRMFLRRMDLRQHRKIVLIDNYVAYTGSMNMVDPRFFKQDAGVGQWIDMMARMEGPVATTLGIVYACDWEIETGKRILPPPPDANIMPFEEETGHTIQVIASGPGFPEEMIHQALLTAVYAAREQLIMTTPYFVPSDDLLHAICTAAQRGVDVSIIVPRENDSMMVRWASRAFFTELLNAGVKIYQFEGGLLHSKSVLVDGQLSLVGTVNLDMRSLWLNFEITLVIDDDGFGADLAQVQDDYIARSALLDGERWNKRPLWHRVTERLFYFFSPLL.

2 consecutive transmembrane segments (helical) span residues 3–23 (TFYTVISWLSVFGYWLLIAGV) and 38–58 (MAWLLIIYILPLVGIIAYLSF). PLD phosphodiesterase domains lie at 219-246 (MDLRQHRKIVLIDNYVAYTGSMNMVDPR) and 399-426 (EGGLLHSKSVLVDGQLSLVGTVNLDMRS). Residues H224, K226, D231, H404, K406, and D411 contribute to the active site.

This sequence belongs to the phospholipase D family. Cardiolipin synthase subfamily. ClsA sub-subfamily.

The protein resides in the cell inner membrane. It carries out the reaction 2 a 1,2-diacyl-sn-glycero-3-phospho-(1'-sn-glycerol) = a cardiolipin + glycerol. Catalyzes the reversible phosphatidyl group transfer from one phosphatidylglycerol molecule to another to form cardiolipin (CL) (diphosphatidylglycerol) and glycerol. This is Cardiolipin synthase A from Yersinia pseudotuberculosis serotype IB (strain PB1/+).